A 219-amino-acid chain; its full sequence is GPI ethanolamine phosphate transferase, stabilizing subunit (219 aa).

Helical transmembrane passes span 11 to 31, 42 to 62, 86 to 106, 113 to 133, 155 to 175, and 189 to 209; these read YTNLLCVFSIFLSIFIPSFFV, TWLCICSASVTTVNLLSYLVV, CFLMSCFLLHIIFVLYGAPLI, FLFAVVLSTFTTVPCLCLLGP, LQITTISSFTGAWLGAFPIPL, and TLGATFGYVAGLVISPLWIYW.

The protein belongs to the PIGF family. In terms of assembly, part of the ethanolamine phosphate transferase 3 complex composed by PIGO and PIGF. Part of the ethanolamine phosphate transferase 2 complex with PIGG. PIGF is required to stabilize PIGG and PIGO.

Its subcellular location is the endoplasmic reticulum membrane. It participates in glycolipid biosynthesis; glycosylphosphatidylinositol-anchor biosynthesis. In terms of biological role, stabilizing subunit of the ethanolamine phosphate transferase 3 and ethanolamine phosphate transferase 2 complexes that sequentially transfer an ethanolamine phosphate (EtNP) from a phosphatidylethanolamine (PE) to the 6-OH position of the third alpha-1,2-linked mannose and the second alpha-1,6-linked mannose of the alpha-D-Man-(1-&gt;2)-alpha-D-Man-(1-&gt;6)-2-PEtn-alpha-D-Man-(1-&gt;4)-alpha-D-GlcN-(1-&gt;6)-(1-radyl,2-acyl-sn-glycero-3-phospho)-2-acyl-inositol (also termed H6) intermediate to generate a 6-PEtn-alpha-D-Man-(1-&gt;2)-6-PEtn-alpha-D-Man-(1-&gt;6)-2-PEtn-alpha-D-Man-(1-&gt;4)-alpha-D-GlcN-(1-&gt;6)-(1-radyl,2-acyl-sn-glycero-3-phospho)-2-acyl-inositol (also termed H8). Participates in the tenth and eleventh steps of the glycosylphosphatidylinositol-anchor biosynthesis, in association with PIGO and PIGG, respectively. In Mus musculus (Mouse), this protein is GPI ethanolamine phosphate transferase, stabilizing subunit.